A 198-amino-acid polypeptide reads, in one-letter code: dTTP/UTP pyrophosphatase (198 aa).

Catalysis depends on aspartate 76, which acts as the Proton acceptor.

Belongs to the Maf family. YhdE subfamily. The cofactor is a divalent metal cation.

Its subcellular location is the cytoplasm. It carries out the reaction dTTP + H2O = dTMP + diphosphate + H(+). The enzyme catalyses UTP + H2O = UMP + diphosphate + H(+). Functionally, nucleoside triphosphate pyrophosphatase that hydrolyzes dTTP and UTP. May have a dual role in cell division arrest and in preventing the incorporation of modified nucleotides into cellular nucleic acids. The protein is dTTP/UTP pyrophosphatase of Shewanella denitrificans (strain OS217 / ATCC BAA-1090 / DSM 15013).